The primary structure comprises 379 residues: 23S rRNA (uracil(747)-C(5))-methyltransferase RlmC (379 aa).

[4Fe-4S] cluster is bound by residues Cys3, Cys11, Cys14, and Cys86. Residues Gln211, Phe240, Glu262, and Asn310 each coordinate S-adenosyl-L-methionine. Cys337 acts as the Nucleophile in catalysis.

This sequence belongs to the class I-like SAM-binding methyltransferase superfamily. RNA M5U methyltransferase family. RlmC subfamily.

The enzyme catalyses uridine(747) in 23S rRNA + S-adenosyl-L-methionine = 5-methyluridine(747) in 23S rRNA + S-adenosyl-L-homocysteine + H(+). Its function is as follows. Catalyzes the formation of 5-methyl-uridine at position 747 (m5U747) in 23S rRNA. In Halothiobacillus neapolitanus (strain ATCC 23641 / c2) (Thiobacillus neapolitanus), this protein is 23S rRNA (uracil(747)-C(5))-methyltransferase RlmC.